A 560-amino-acid polypeptide reads, in one-letter code: Oxygen-dependent choline dehydrogenase 1 (560 aa).

8 to 37 is an FAD binding site; the sequence is DYIIIGAGSAGNVLATRLTEDPDVQVLLLE. His-475 acts as the Proton acceptor in catalysis.

The protein belongs to the GMC oxidoreductase family. It depends on FAD as a cofactor.

It catalyses the reaction choline + A = betaine aldehyde + AH2. It carries out the reaction betaine aldehyde + NAD(+) + H2O = glycine betaine + NADH + 2 H(+). It functions in the pathway amine and polyamine biosynthesis; betaine biosynthesis via choline pathway; betaine aldehyde from choline (cytochrome c reductase route): step 1/1. Functionally, involved in the biosynthesis of the osmoprotectant glycine betaine. Catalyzes the oxidation of choline to betaine aldehyde and betaine aldehyde to glycine betaine at the same rate. The sequence is that of Oxygen-dependent choline dehydrogenase 1 from Chromohalobacter salexigens (strain ATCC BAA-138 / DSM 3043 / CIP 106854 / NCIMB 13768 / 1H11).